Here is a 1482-residue protein sequence, read N- to C-terminus: Chromosome partition protein MukB (1482 aa).

34 to 41 contributes to the ATP binding site; the sequence is GGNGAGKS. A coiled-coil region spans residues 333–665; that stretch reads ASDHLNLVQT…LEKQIERLSQ (333 aa). Residues 666-783 are flexible hinge; the sequence is PSGAEDSRMI…ELPLFGRAAR (118 aa). Coiled coils occupy residues 784 to 1116 and 1209 to 1260; these read ENRL…AKAG and VDAI…MLNQ.

The protein belongs to the SMC family. MukB subfamily. Homodimerization via its hinge domain. Binds to DNA via its C-terminal region. Interacts, and probably forms a ternary complex, with MukE and MukF via its C-terminal region. The complex formation is stimulated by calcium or magnesium. Interacts with tubulin-related protein FtsZ.

The protein localises to the cytoplasm. It localises to the nucleoid. In terms of biological role, plays a central role in chromosome condensation, segregation and cell cycle progression. Functions as a homodimer, which is essential for chromosome partition. Involved in negative DNA supercoiling in vivo, and by this means organize and compact chromosomes. May achieve or facilitate chromosome segregation by condensation DNA from both sides of a centrally located replisome during cell division. The chain is Chromosome partition protein MukB from Photorhabdus laumondii subsp. laumondii (strain DSM 15139 / CIP 105565 / TT01) (Photorhabdus luminescens subsp. laumondii).